Consider the following 58-residue polypeptide: Ribosome biogenesis protein Nop10 (58 aa).

This sequence belongs to the NOP10 family.

Involved in ribosome biogenesis; more specifically in 18S rRNA pseudouridylation and in cleavage of pre-rRNA. This chain is Ribosome biogenesis protein Nop10, found in Methanobrevibacter smithii (strain ATCC 35061 / DSM 861 / OCM 144 / PS).